The following is a 580-amino-acid chain: CTP synthase (580 aa).

Residues 304–559 form the Glutamine amidotransferase type-1 domain; that stretch reads NIILVGKYVS…VAASSGCLDE (256 aa). Active-site for GATase activity residues include C403, H532, and E534.

The protein belongs to the CTP synthase family.

The enzyme catalyses UTP + L-glutamine + ATP + H2O = CTP + L-glutamate + ADP + phosphate + 2 H(+). Its pathway is pyrimidine metabolism; CTP biosynthesis via de novo pathway; CTP from UDP: step 2/2. Its function is as follows. Catalyzes the ATP-dependent amination of UTP to CTP with either L-glutamine or ammonia as the source of nitrogen. In Gibberella zeae (strain ATCC MYA-4620 / CBS 123657 / FGSC 9075 / NRRL 31084 / PH-1) (Wheat head blight fungus), this protein is CTP synthase (URA7).